A 299-amino-acid chain; its full sequence is tRNA-cytidine(32) 2-sulfurtransferase (299 aa).

Positions 56–61 (SGGKDS) match the PP-loop motif motif. Residues C131, C134, and C222 each contribute to the [4Fe-4S] cluster site.

This sequence belongs to the TtcA family. Homodimer. Requires Mg(2+) as cofactor. [4Fe-4S] cluster serves as cofactor.

Its subcellular location is the cytoplasm. The catalysed reaction is cytidine(32) in tRNA + S-sulfanyl-L-cysteinyl-[cysteine desulfurase] + AH2 + ATP = 2-thiocytidine(32) in tRNA + L-cysteinyl-[cysteine desulfurase] + A + AMP + diphosphate + H(+). The protein operates within tRNA modification. Catalyzes the ATP-dependent 2-thiolation of cytidine in position 32 of tRNA, to form 2-thiocytidine (s(2)C32). The sulfur atoms are provided by the cysteine/cysteine desulfurase (IscS) system. This chain is tRNA-cytidine(32) 2-sulfurtransferase, found in Xylella fastidiosa (strain M23).